A 266-amino-acid chain; its full sequence is Aliphatic sulfonates import ATP-binding protein SsuB (266 aa).

The ABC transporter domain occupies 23–244 (LALDAITKHY…RRGSAKLAEL (222 aa)). 55–62 (GRSGCGKS) is an ATP binding site.

This sequence belongs to the ABC transporter superfamily. Aliphatic sulfonates importer (TC 3.A.1.17.2) family. The complex is composed of two ATP-binding proteins (SsuB), two transmembrane proteins (SsuC) and a solute-binding protein (SsuA).

Its subcellular location is the cell inner membrane. It carries out the reaction ATP + H2O + aliphatic sulfonate-[sulfonate-binding protein]Side 1 = ADP + phosphate + aliphatic sulfonateSide 2 + [sulfonate-binding protein]Side 1.. In terms of biological role, part of the ABC transporter complex SsuABC involved in aliphatic sulfonates import. Responsible for energy coupling to the transport system. The polypeptide is Aliphatic sulfonates import ATP-binding protein SsuB (Pectobacterium atrosepticum (strain SCRI 1043 / ATCC BAA-672) (Erwinia carotovora subsp. atroseptica)).